We begin with the raw amino-acid sequence, 77 residues long: Large ribosomal subunit protein bL28 (77 aa).

The interval 1–26 is disordered; it reads MARVCKVTGKRPMSGNNVSHANNKTK.

Belongs to the bacterial ribosomal protein bL28 family.

The polypeptide is Large ribosomal subunit protein bL28 (Neisseria gonorrhoeae (strain ATCC 700825 / FA 1090)).